Reading from the N-terminus, the 428-residue chain is Probable methanogen homoaconitase large subunit (428 aa).

The [4Fe-4S] cluster site is built by Cys-304, Cys-364, and Cys-367.

This sequence belongs to the aconitase/IPM isomerase family. LeuC type 2 subfamily. Heterotetramer of 2 HacA and 2 HacB proteins.

The catalysed reaction is (2R)-homocitrate = (2R,3S)-homoisocitrate. It carries out the reaction (2R)-homocitrate = cis-homoaconitate + H2O. It catalyses the reaction (2R,3S)-homoisocitrate = cis-homoaconitate + H2O. The enzyme catalyses cis-(homo)2aconitate + H2O = (2R,3S)-iso(homo)2citrate. The catalysed reaction is cis-(homo)3aconitate + H2O = (2R,3S)-iso(homo)3citrate. It participates in organic acid metabolism; 2-oxosuberate biosynthesis. Its function is as follows. Component of a hydro-lyase with broad substrate specificity for cis-unsaturated tricarboxylic acids. Catalyzes both the reversible dehydration of (R)-homocitrate ((R)-2-hydroxybutane-1,2,4-tricarboxylate) to produce cis-homoaconitate ((Z)-but-1-ene-1,2,4-tricarboxylate), and its hydration to homoisocitrate ((1R,2S)-1-hydroxybutane-1,2,4-tricarboxylate). Is also able to hydrate the analogous longer chain substrates cis-homo(2)-aconitate, cis-homo(3)-aconitate. These reactions are part of the biosynthesis pathway of coenzyme B. The protein is Probable methanogen homoaconitase large subunit (hacA) of Methanothermobacter thermautotrophicus (strain ATCC 29096 / DSM 1053 / JCM 10044 / NBRC 100330 / Delta H) (Methanobacterium thermoautotrophicum).